We begin with the raw amino-acid sequence, 713 residues long: Forkhead box protein P2 (713 aa).

The segment covering 1–28 has biased composition (polar residues); the sequence is MMQESVTETISNSSMNQNGMSTLSSQLD. 2 disordered regions span residues 1 to 44 and 279 to 337; these read MMQE…SSEV and DNGI…TGAS. The segment covering 290 to 303 has biased composition (low complexity); the sequence is TTNNSSSTTSSTTS. The span at 313-322 shows a compositional bias: polar residues; that stretch reads SIVNGQSSVL. The span at 324-335 shows a compositional bias: basic and acidic residues; sequence ARRDSSSHEETG. A C2H2-type zinc finger spans residues 344–369; sequence GVCKWPGCESICEDFGQFLKHLNNEH. The leucine-zipper stretch occupies residues 386 to 407; it reads VQQLEIQLSKERERLQAMMTHL. The segment at 420–424 is CTBP1-binding; it reads PLNLV. Over residues 436–457 the composition is skewed to low complexity; that stretch reads TSPQSLPQTPTTPTAPVTPITQ. The tract at residues 436 to 463 is disordered; the sequence is TSPQSLPQTPTTPTAPVTPITQGPSVIT. Residues 502 to 592 constitute a DNA-binding region (fork-head); sequence RPPFTYATLI…SQKITGSPTL (91 aa). Disordered stretches follow at residues 647–666 and 676–713; these read LDHIDSNGNSSPGCSPQPHI and VIAEDEDCPMSLVTTANHSPELEDDREIEEEPLSEDLE. Positions 697–713 are enriched in acidic residues; that stretch reads LEDDREIEEEPLSEDLE.

As to quaternary structure, forms homodimers and heterodimers with FOXP1 and FOXP4. Dimerization is required for DNA-binding. Interacts with CTBP1. Interacts with FOXP1. Interacts with TBR1. Interacts with ZMYM2.

The protein localises to the nucleus. Functionally, transcriptional repressor that may play a role in the specification and differentiation of lung epithelium. May also play a role in developing neural, gastrointestinal and cardiovascular tissues. Can act with CTBP1 to synergistically repress transcription but CTPBP1 is not essential. Plays a role in synapse formation by regulating SRPX2 levels. The protein is Forkhead box protein P2 (FOXP2) of Pongo pygmaeus (Bornean orangutan).